The chain runs to 589 residues: Nicotinate phosphoribosyltransferase (589 aa).

Positions 1–30 (MSQSNTPLKRKKTENGYSENGSTTGATSNQ) are disordered. Residues 15–30 (NGYSENGSTTGATSNQ) are compositionally biased toward polar residues. Nicotinate-binding residues include Y68 and T256. Phosphohistidine is present on H259. A nicotinate-binding site is contributed by R356. T418 provides a ligand contact to 5-phospho-alpha-D-ribose 1-diphosphate.

This sequence belongs to the NAPRTase family. Mg(2+) is required as a cofactor. Requires Mn(2+) as cofactor. Post-translationally, transiently phosphorylated on a His residue during the reaction cycle. Phosphorylation strongly increases the affinity for substrates and increases the rate of nicotinate D-ribonucleotide production. Dephosphorylation regenerates the low-affinity form of the enzyme, leading to product release.

The catalysed reaction is nicotinate + 5-phospho-alpha-D-ribose 1-diphosphate + ATP + H2O = nicotinate beta-D-ribonucleotide + ADP + phosphate + diphosphate. It functions in the pathway cofactor biosynthesis; NAD(+) biosynthesis; nicotinate D-ribonucleotide from nicotinate: step 1/1. Functionally, catalyzes the first step in the biosynthesis of NAD from nicotinic acid, the ATP-dependent synthesis of beta-nicotinate D-ribonucleotide from nicotinate and 5-phospho-D-ribose 1-phosphate. Helps prevent cellular oxidative stress via its role in NAD biosynthesis. The chain is Nicotinate phosphoribosyltransferase (naprt) from Dictyostelium discoideum (Social amoeba).